Reading from the N-terminus, the 205-residue chain is Holliday junction branch migration complex subunit RuvA (205 aa).

Positions 1-64 are domain I; sequence MIGKLRGIVD…DEAIRLIGFT (64 aa). The domain II stretch occupies residues 65-143; the sequence is TDSEREWFRL…DSMGLSAALE (79 aa). The interval 144-152 is flexible linker; it reads VGVNGEAVS. A domain III region spans residues 153-205; the sequence is SVSAPARDAVSALVNLGYPQAQAMGAVAAAAKRLDDAASTEQLIRHGLKELAR.

The protein belongs to the RuvA family. As to quaternary structure, homotetramer. Forms an RuvA(8)-RuvB(12)-Holliday junction (HJ) complex. HJ DNA is sandwiched between 2 RuvA tetramers; dsDNA enters through RuvA and exits via RuvB. An RuvB hexamer assembles on each DNA strand where it exits the tetramer. Each RuvB hexamer is contacted by two RuvA subunits (via domain III) on 2 adjacent RuvB subunits; this complex drives branch migration. In the full resolvosome a probable DNA-RuvA(4)-RuvB(12)-RuvC(2) complex forms which resolves the HJ.

Its subcellular location is the cytoplasm. Its function is as follows. The RuvA-RuvB-RuvC complex processes Holliday junction (HJ) DNA during genetic recombination and DNA repair, while the RuvA-RuvB complex plays an important role in the rescue of blocked DNA replication forks via replication fork reversal (RFR). RuvA specifically binds to HJ cruciform DNA, conferring on it an open structure. The RuvB hexamer acts as an ATP-dependent pump, pulling dsDNA into and through the RuvAB complex. HJ branch migration allows RuvC to scan DNA until it finds its consensus sequence, where it cleaves and resolves the cruciform DNA. In Parvibaculum lavamentivorans (strain DS-1 / DSM 13023 / NCIMB 13966), this protein is Holliday junction branch migration complex subunit RuvA.